Reading from the N-terminus, the 275-residue chain is N-(5'-phosphoribosyl)anthranilate isomerase 2, chloroplastic (275 aa).

Residues 1–32 (MSTGISTDLHVHFGALNFSKTYKSGLSNRTVS) constitute a chloroplast transit peptide.

This sequence belongs to the TrpF family. As to expression, expressed in roots and shoots.

The protein localises to the plastid. The protein resides in the chloroplast. It carries out the reaction N-(5-phospho-beta-D-ribosyl)anthranilate = 1-(2-carboxyphenylamino)-1-deoxy-D-ribulose 5-phosphate. It functions in the pathway amino-acid biosynthesis; L-tryptophan biosynthesis; L-tryptophan from chorismate: step 3/5. This is N-(5'-phosphoribosyl)anthranilate isomerase 2, chloroplastic (PAI2) from Arabidopsis thaliana (Mouse-ear cress).